Consider the following 354-residue polypeptide: Protein RecA (354 aa).

Position 65-72 (65-72 (GPESSGKT)) interacts with ATP.

It belongs to the RecA family.

The protein localises to the cytoplasm. In terms of biological role, can catalyze the hydrolysis of ATP in the presence of single-stranded DNA, the ATP-dependent uptake of single-stranded DNA by duplex DNA, and the ATP-dependent hybridization of homologous single-stranded DNAs. It interacts with LexA causing its activation and leading to its autocatalytic cleavage. The sequence is that of Protein RecA from Vibrio cholerae serotype O1 (strain ATCC 39315 / El Tor Inaba N16961).